The chain runs to 333 residues: Perchlorate reductase subunit beta (333 aa).

Positions 12-40 (LTYVTDLNKCIGCQTCTVACKKLWTTGPG) constitute a 4Fe-4S ferredoxin-type 1 domain. [4Fe-4S] cluster-binding residues include Cys-21, Cys-24, Cys-27, and Cys-31. The segment at 101 to 121 (KERVRPSPTPRSAPNWDEDQG) is disordered. 4Fe-4S ferredoxin-type domains lie at 128 to 159 (NSFF…KREQ) and 161 to 190 (GIVV…FNPV). [4Fe-4S] cluster is bound by residues Cys-137, Cys-140, and Cys-145. Positions 149, 170, and 176 each coordinate [3Fe-4S] cluster. Residues Cys-180, Cys-197, Cys-200, Cys-212, and Cys-216 each contribute to the [4Fe-4S] cluster site.

As to quaternary structure, heterotrimer of alpha, beta and gamma subunits. [3Fe-4S] cluster is required as a cofactor. The cofactor is [4Fe-4S] cluster.

Its subcellular location is the periplasm. Functionally, component of the perchlorate reductase that catalyzes the reduction of perchlorate to chlorite and allows anaerobic growth on perchlorate as the sole electron acceptor. The beta subunit may be responsible for electron transfer to the catalytic alpha subunit PcrA. The protein is Perchlorate reductase subunit beta (pcrB) of Dechloromonas aromatica (strain RCB).